Consider the following 148-residue polypeptide: Thiol-disulfide oxidoreductase YkuV (148 aa).

Positions 2-145 (KLRQPMPELT…LEKRVNRVLA (144 aa)) constitute a Thioredoxin domain. C41 and C44 form a disulfide bridge.

Monomer.

It localises to the cytoplasm. Participates in various redox reactions through the reversible oxidation of its active center dithiol to a disulfide and catalyzes dithiol-disulfide exchange reactions. The chain is Thiol-disulfide oxidoreductase YkuV (ykuV) from Bacillus subtilis (strain 168).